Reading from the N-terminus, the 338-residue chain is Nicotinate-nucleotide--dimethylbenzimidazole phosphoribosyltransferase (338 aa).

Residue Glu305 is the Proton acceptor of the active site.

It belongs to the CobT family.

It catalyses the reaction 5,6-dimethylbenzimidazole + nicotinate beta-D-ribonucleotide = alpha-ribazole 5'-phosphate + nicotinate + H(+). The protein operates within nucleoside biosynthesis; alpha-ribazole biosynthesis; alpha-ribazole from 5,6-dimethylbenzimidazole: step 1/2. In terms of biological role, catalyzes the synthesis of alpha-ribazole-5'-phosphate from nicotinate mononucleotide (NAMN) and 5,6-dimethylbenzimidazole (DMB). This is Nicotinate-nucleotide--dimethylbenzimidazole phosphoribosyltransferase from Sinorhizobium fredii (strain NBRC 101917 / NGR234).